Here is a 383-residue protein sequence, read N- to C-terminus: Outer membrane protein Omp-EA (383 aa).

The signal sequence occupies residues 1–21 (MKRNILAVLIPALLAAGAANA). Residues 22–30 (AEIYNKDGN) are Periplasmic-facing. The beta stranded transmembrane segment at 31–45 (KLDLYGKVKAMRYLS) threads the bilayer. Topologically, residues 46 to 58 (DADSNASNNADKS) are extracellular. The beta stranded transmembrane segment at 59 to 70 (YTRIGFKGQTLI) threads the bilayer. At 71–74 (NDQL) the chain is on the periplasmic side. Residues 75–86 (TGYGQWEYNFSL) traverse the membrane as a beta stranded segment. The Extracellular segment spans residues 87-100 (SNSESSSDAQSGNK). Residues 101-109 (TRLGFAGLK) traverse the membrane as a beta stranded segment. Topologically, residues 110 to 112 (LKD) are periplasmic. Residues 113 to 122 (YGSVDYGRNY) traverse the membrane as a beta stranded segment. Residues 123–155 (GVIYDVEAFTDMMPEFGATGYTRTDTYMLTRGN) are Extracellular-facing. A beta stranded membrane pass occupies residues 156–164 (SMLTWRNSD). The Periplasmic segment spans residues 165–171 (FFGLVDG). A beta stranded transmembrane segment spans residues 172 to 178 (LKIALQY). Residues 179–198 (QGKNEGSGTRATNVSNGDGY) lie on the Extracellular side of the membrane. A beta stranded transmembrane segment spans residues 199 to 206 (GASLSYKI). At 207 to 209 (VEG) the chain is on the periplasmic side. Residues 210–219 (LTINGAMSSS) traverse the membrane as a beta stranded segment. The Extracellular segment spans residues 220-243 (NRLNANSASSTTSQKMAAYGSGGR). Residues 244–252 (AEAWATGLK) form a beta stranded membrane-spanning segment. The Periplasmic segment spans residues 253-258 (YDANGV). Residues 259-268 (YLAGTYAETR) traverse the membrane as a beta stranded segment. The Extracellular portion of the chain corresponds to 269–296 (NTNPFSGASYTFAGNSTATAVSGYANKV). The chain crosses the membrane as a beta stranded span at residues 297–307 (QNTELVAQYQF). The Periplasmic portion of the chain corresponds to 308–310 (DSG). The chain crosses the membrane as a beta stranded span at residues 311–319 (LRPSLAYVQ). Residues 320-335 (TKAKDIENGIGDADLS) are Extracellular-facing. Residues 336–346 (KFVDVAATYYF) form a beta stranded membrane-spanning segment. The Periplasmic portion of the chain corresponds to 347 to 351 (NKNMS). The chain crosses the membrane as a beta stranded span at residues 352–361 (AFVDYKVNLL). The Extracellular segment spans residues 362 to 372 (SDSNKLHLNTD). The beta stranded transmembrane segment at 373 to 383 (DIVAVGLVYQF) threads the bilayer.

Belongs to the Gram-negative porin family. In terms of assembly, homotrimer.

The protein localises to the cell outer membrane. In terms of biological role, may play an important role in maintaining pathogenicity in plants. This chain is Outer membrane protein Omp-EA (omp-EA), found in Erwinia amylovora (Fire blight bacteria).